The sequence spans 489 residues: Actin-related protein 4 (489 aa).

Residues 323–379 (KRTKPSGVNKSDKKVTPTEEKEQEAVSKSTSPAANSADTPNETGKRPLEEEKPPKEN) form a disordered region. Positions 332 to 347 (KSDKKVTPTEEKEQEA) are enriched in basic and acidic residues. Residues 348–364 (VSKSTSPAANSADTPNE) are compositionally biased toward polar residues. Serine 349 carries the post-translational modification Phosphoserine. The segment covering 365–379 (TGKRPLEEEKPPKEN) has biased composition (basic and acidic residues).

Belongs to the actin family. ARP4 subfamily. As to quaternary structure, component of the NuA4 histone acetyltransferase complex composed of at least ACT1, ARP4, EAF3, EAF5, EAF6, EAF7, EPL1, ESA1, SWC4, TRA1, VID21, YAF9 and YNG2. Component of the chromatin-remodeling INO80 complex, at least composed of ARP4, ARP5, ARP8, RVB1, RVB2, TAF14, NHP10, IES1, IES3, IES4, IES6, ACT1, IES2, IES5 and INO80. Component of the SWR1 chromatin remodeling complex composed of at least ACT1, ARP4, RVB1, RVB2, ARP6, YAF9, VPS71, VPS72, SWC3, SWC4, SWC5, SWC7 and SWR1, and perhaps BDF1. Interacts with histones H4 (HHF1 and HHF2), H3 (HHT1 and HHT2) and H2A (HTA1 and HTA2).

It is found in the nucleus. Its function is as follows. Chromatin interaction component of the NuA4 histone acetyltransferase complex which is involved in transcriptional activation of selected genes principally by acetylation of nucleosomal histone H4 and H2A. The NuA4 complex is also involved in DNA repair. ARP4 recognizes H2AS128ph (gamma-H2A) and is required for NuA4 complex integrity. Component of the SWR1 complex which mediates the ATP-dependent exchange of histone H2A for the H2A variant HZT1 leading to transcriptional regulation of selected genes by chromatin remodeling. Component of the INO80 complex which remodels chromatin by shifting nucleosomes. Its ability to induce transcription of some phosphate-responsive genes is modulated by inositol polyphosphates. The INO80 complex is involved in DNA repair by associating to gamma-H2A as a response to DNA damage. The polypeptide is Actin-related protein 4 (ARP4) (Saccharomyces cerevisiae (strain ATCC 204508 / S288c) (Baker's yeast)).